The following is a 394-amino-acid chain: Quinolinate synthase (394 aa).

The iminosuccinate site is built by His67 and Ser84. A [4Fe-4S] cluster-binding site is contributed by Cys131. Iminosuccinate is bound by residues 163–165 (YMN) and Ser184. Cys254 contacts [4Fe-4S] cluster. Iminosuccinate contacts are provided by residues 280 to 282 (HPE) and Thr297. Position 346 (Cys346) interacts with [4Fe-4S] cluster.

The protein belongs to the quinolinate synthase family. Type 3 subfamily. [4Fe-4S] cluster serves as cofactor.

It is found in the cytoplasm. It carries out the reaction iminosuccinate + dihydroxyacetone phosphate = quinolinate + phosphate + 2 H2O + H(+). It functions in the pathway cofactor biosynthesis; NAD(+) biosynthesis; quinolinate from iminoaspartate: step 1/1. Functionally, catalyzes the condensation of iminoaspartate with dihydroxyacetone phosphate to form quinolinate. This is Quinolinate synthase from Streptomyces coelicolor (strain ATCC BAA-471 / A3(2) / M145).